Here is a 394-residue protein sequence, read N- to C-terminus: MMNDSQVQLFQLYNYSVYSNGTISNFTNCYLINDEHTPIIESDGMIYNGQSCDSPVKSLASHGAVGIVTACFCFFLIPLLLVNIAKYWKGKPPLLKRRMEFIWITLLILALAVGGFAYIDVDRNLVQGAAMKIFSFTFQTALPISIAIIWHVISTYGFALYRQRIVVGKHAAHFSLDHWIFVVEYYAPIVFYVFNLMGFFLAALHPWTKVVRGDGNAATDGRFKASSVLLAIAWVFACAMFIVYSFVYKLDRRGRWVGMVIMMISILPRIVYQFLETWSFTLNASNVSVNAGLVFGLGFCPPLILAYTVCIYGWAVPSIAELEKEAIHEECRQRKRRTTISRDNSTRSTWGIGSEHDMQCLPPSYETMGPCEKEMKEETNEVEIASIESGEVRE.

N-linked (GlcNAc...) asparagine glycans are attached at residues Asn-3, Asn-14, Asn-20, and Asn-25. The next 6 membrane-spanning stretches (helical) occupy residues 64 to 84 (AVGIVTACFCFFLIPLLLVNI), 101 to 121 (FIWITLLILALAVGGFAYIDV), 133 to 153 (IFSFTFQTALPISIAIIWHVI), 180 to 200 (IFVVEYYAPIVFYVFNLMGFF), 228 to 248 (VLLAIAWVFACAMFIVYSFVY), and 256 to 276 (WVGMVIMMISILPRIVYQFLE). N-linked (GlcNAc...) asparagine glycosylation is found at Asn-283 and Asn-286. A helical membrane pass occupies residues 291 to 311 (AGLVFGLGFCPPLILAYTVCI). Asn-344 carries N-linked (GlcNAc...) asparagine glycosylation.

It is found in the membrane. This is an uncharacterized protein from Schizosaccharomyces pombe (strain 972 / ATCC 24843) (Fission yeast).